A 362-amino-acid chain; its full sequence is Molybdenum import ATP-binding protein ModC (362 aa).

The region spanning 2-236 is the ABC transporter domain; that stretch reads ASPIEVRLQM…LDLPLAMGSD (235 aa). 34-41 contacts ATP; it reads GPSGSGKT. Residues 297–362 enclose the Mop domain; that stretch reads QSSILNRLPV…AQIKAVAVLA (66 aa).

It belongs to the ABC transporter superfamily. Molybdate importer (TC 3.A.1.8) family. As to quaternary structure, the complex is composed of two ATP-binding proteins (ModC), two transmembrane proteins (ModB) and a solute-binding protein (ModA).

It localises to the cell inner membrane. It carries out the reaction molybdate(out) + ATP + H2O = molybdate(in) + ADP + phosphate + H(+). In terms of biological role, part of the ABC transporter complex ModABC involved in molybdenum import. Responsible for energy coupling to the transport system. This is Molybdenum import ATP-binding protein ModC from Pseudomonas syringae pv. syringae (strain B728a).